We begin with the raw amino-acid sequence, 286 residues long: Shikimate dehydrogenase (NADP(+)) (286 aa).

Shikimate is bound by residues 22 to 24 (SRS) and Thr71. Residue Lys75 is the Proton acceptor of the active site. Glu87 serves as a coordination point for NADP(+). Shikimate contacts are provided by Asn96 and Asp111. NADP(+)-binding positions include 136–140 (GAGGA), 160–165 (NRTAAR), and Ile225. Tyr227 contributes to the shikimate binding site. Gly248 is a binding site for NADP(+).

The protein belongs to the shikimate dehydrogenase family. In terms of assembly, homodimer.

The catalysed reaction is shikimate + NADP(+) = 3-dehydroshikimate + NADPH + H(+). It participates in metabolic intermediate biosynthesis; chorismate biosynthesis; chorismate from D-erythrose 4-phosphate and phosphoenolpyruvate: step 4/7. Involved in the biosynthesis of the chorismate, which leads to the biosynthesis of aromatic amino acids. Catalyzes the reversible NADPH linked reduction of 3-dehydroshikimate (DHSA) to yield shikimate (SA). The polypeptide is Shikimate dehydrogenase (NADP(+)) (Sinorhizobium fredii (strain NBRC 101917 / NGR234)).